A 655-amino-acid polypeptide reads, in one-letter code: p-hydroxybenzoic acid efflux pump subunit AaeB (655 aa).

11 consecutive transmembrane segments (helical) span residues 13–33 (FAVK…HFQL), 38–58 (WAVL…GGEP), 69–89 (LRII…ILMI), 93–113 (LLMV…SSLV), 121–141 (WGLA…EPLL), 152–172 (EIVI…PRSI), 370–390 (LFWL…IAVV), 407–427 (FLYG…VILP), 431–451 (QSML…GIEV), 459–479 (LGAL…TFHF), and 482–502 (FLDS…VILL).

The protein belongs to the aromatic acid exporter ArAE (TC 2.A.85) family.

It is found in the cell inner membrane. Functionally, forms an efflux pump with AaeA. Could function as a metabolic relief valve, allowing to eliminate certain compounds when they accumulate to high levels in the cell. This chain is p-hydroxybenzoic acid efflux pump subunit AaeB, found in Enterobacter cloacae subsp. cloacae (strain ATCC 13047 / DSM 30054 / NBRC 13535 / NCTC 10005 / WDCM 00083 / NCDC 279-56).